A 175-amino-acid polypeptide reads, in one-letter code: Transcription factor HES-3 (175 aa).

The bHLH domain occupies 1 to 49 (MEKKRRARINVSLEQLRSLLERHYSHQIRKRKLEKADILELSVKYMRSL). Residues 65–98 (YPSGFQGGLRGVSQRLRPGEGDSGLRCPLLLQRR) form the Orange domain. The segment at 126–166 (RAAGGSHSPQSPLPLPGGLLESSTDVVAPHPASNCQAESTR) is disordered. Low complexity predominate over residues 129-148 (GGSHSPQSPLPLPGGLLESS). The WRPW motif motif lies at 172–175 (WRPW).

In terms of assembly, transcription repression requires formation of a complex with a corepressor protein of the Groucho/TLE family.

The protein resides in the nucleus. In terms of biological role, transcriptional repressor of genes that require a bHLH protein for their transcription. The polypeptide is Transcription factor HES-3 (Hes3) (Mus musculus (Mouse)).